The chain runs to 248 residues: Triosephosphate isomerase (248 aa).

Substrate is bound at residue 9–11 (NWK). The active-site Electrophile is the H92. E164 functions as the Proton acceptor in the catalytic mechanism. Residues G170, S210, and 231-232 (GG) contribute to the substrate site.

This sequence belongs to the triosephosphate isomerase family. Homodimer.

The protein localises to the cytoplasm. The catalysed reaction is D-glyceraldehyde 3-phosphate = dihydroxyacetone phosphate. It participates in carbohydrate biosynthesis; gluconeogenesis. Its pathway is carbohydrate degradation; glycolysis; D-glyceraldehyde 3-phosphate from glycerone phosphate: step 1/1. In terms of biological role, involved in the gluconeogenesis. Catalyzes stereospecifically the conversion of dihydroxyacetone phosphate (DHAP) to D-glyceraldehyde-3-phosphate (G3P). The sequence is that of Triosephosphate isomerase from Mycoplasma capricolum subsp. capricolum (strain California kid / ATCC 27343 / NCTC 10154).